Consider the following 303-residue polypeptide: Glycine--tRNA ligase alpha subunit (303 aa).

This sequence belongs to the class-II aminoacyl-tRNA synthetase family. As to quaternary structure, tetramer of two alpha and two beta subunits.

It localises to the cytoplasm. It carries out the reaction tRNA(Gly) + glycine + ATP = glycyl-tRNA(Gly) + AMP + diphosphate. This is Glycine--tRNA ligase alpha subunit from Enterobacter sp. (strain 638).